The primary structure comprises 268 residues: MHHTTKKKYGQNFLTDVNLLNKIVTKASITDKNVLEIGPGKGALTKIIVPQAKHVLAYEIDATLKPFLNFENHNNVNIIYDDFLKRDLLKDFDHYFSPNSQLSLIGNLPYYITSPILFKIIDTPQINDATIMIQKEVGMRLLAQPNNKNYNALSVIIQFLFSIEKIQEVKRHMFFPAPKVDSIVIKLTKNNNICPTFLQQFIKFVKASFKQKRKTLLNNLSCQFLLSKETIIPFFLQHHIPLQIRAEQVTLETFQKLTVKWFIFFNIS.

Positions 12, 14, 38, 59, 82, and 107 each coordinate S-adenosyl-L-methionine.

Belongs to the class I-like SAM-binding methyltransferase superfamily. rRNA adenine N(6)-methyltransferase family. RsmA subfamily.

The protein localises to the cytoplasm. The catalysed reaction is adenosine(1518)/adenosine(1519) in 16S rRNA + 4 S-adenosyl-L-methionine = N(6)-dimethyladenosine(1518)/N(6)-dimethyladenosine(1519) in 16S rRNA + 4 S-adenosyl-L-homocysteine + 4 H(+). Functionally, specifically dimethylates two adjacent adenosines (A1518 and A1519) in the loop of a conserved hairpin near the 3'-end of 16S rRNA in the 30S particle. May play a critical role in biogenesis of 30S subunits. The polypeptide is Ribosomal RNA small subunit methyltransferase A (Onion yellows phytoplasma (strain OY-M)).